The following is a 194-amino-acid chain: Imidazoleglycerol-phosphate dehydratase (194 aa).

This sequence belongs to the imidazoleglycerol-phosphate dehydratase family.

The protein localises to the cytoplasm. It catalyses the reaction D-erythro-1-(imidazol-4-yl)glycerol 3-phosphate = 3-(imidazol-4-yl)-2-oxopropyl phosphate + H2O. Its pathway is amino-acid biosynthesis; L-histidine biosynthesis; L-histidine from 5-phospho-alpha-D-ribose 1-diphosphate: step 6/9. The polypeptide is Imidazoleglycerol-phosphate dehydratase (Limosilactobacillus fermentum (strain NBRC 3956 / LMG 18251) (Lactobacillus fermentum)).